The sequence spans 118 residues: Large ribosomal subunit protein bL20 (118 aa).

It belongs to the bacterial ribosomal protein bL20 family.

In terms of biological role, binds directly to 23S ribosomal RNA and is necessary for the in vitro assembly process of the 50S ribosomal subunit. It is not involved in the protein synthesizing functions of that subunit. The polypeptide is Large ribosomal subunit protein bL20 (Pseudomonas fluorescens (strain SBW25)).